We begin with the raw amino-acid sequence, 95 residues long: 1,2-phenylacetyl-CoA epoxidase, subunit B (95 aa).

In terms of assembly, homotrimer. Forms a stable heterodimer with PaaC. Probably forms an oligomer with PaaAC.

It functions in the pathway aromatic compound metabolism; phenylacetate degradation. Functionally, component of 1,2-phenylacetyl-CoA epoxidase multicomponent enzyme system which catalyzes the reduction of phenylacetyl-CoA (PA-CoA) to form 1,2-epoxyphenylacetyl-CoA. The subunit B may play a regulatory role or be directly involved in electron transport. The protein is 1,2-phenylacetyl-CoA epoxidase, subunit B (paaB) of Escherichia coli (strain K12).